A 116-amino-acid chain; its full sequence is Ribosome-binding factor A (116 aa).

Belongs to the RbfA family. In terms of assembly, monomer. Binds 30S ribosomal subunits, but not 50S ribosomal subunits or 70S ribosomes.

The protein resides in the cytoplasm. In terms of biological role, one of several proteins that assist in the late maturation steps of the functional core of the 30S ribosomal subunit. Associates with free 30S ribosomal subunits (but not with 30S subunits that are part of 70S ribosomes or polysomes). Required for efficient processing of 16S rRNA. May interact with the 5'-terminal helix region of 16S rRNA. This chain is Ribosome-binding factor A, found in Streptococcus sanguinis (strain SK36).